Here is a 235-residue protein sequence, read N- to C-terminus: Orotidine 5'-phosphate decarboxylase (235 aa).

Residues Asp16, Lys38, 65 to 74, Thr120, Arg181, Gln190, Gly210, and Arg211 each bind substrate; that span reads DLKLHDIGNT. Lys67 functions as the Proton donor in the catalytic mechanism.

This sequence belongs to the OMP decarboxylase family. Type 1 subfamily. As to quaternary structure, homodimer.

It catalyses the reaction orotidine 5'-phosphate + H(+) = UMP + CO2. The protein operates within pyrimidine metabolism; UMP biosynthesis via de novo pathway; UMP from orotate: step 2/2. Functionally, catalyzes the decarboxylation of orotidine 5'-monophosphate (OMP) to uridine 5'-monophosphate (UMP). The sequence is that of Orotidine 5'-phosphate decarboxylase from Rhodopseudomonas palustris (strain BisA53).